The following is a 466-amino-acid chain: tRNA-2-methylthio-N(6)-dimethylallyladenosine synthase (466 aa).

Residues 2-118 (KRFYIHTIGC…LPGHIQAVAH (117 aa)) enclose the MTTase N-terminal domain. [4Fe-4S] cluster-binding residues include Cys11, Cys47, Cys81, Cys157, Cys161, and Cys164. A Radical SAM core domain is found at 143-372 (DSSGVTGFIT…LELQNRITAE (230 aa)). Positions 375 to 453 (RALEGRVEQV…AHSLSGIAVG (79 aa)) constitute a TRAM domain.

The protein belongs to the methylthiotransferase family. MiaB subfamily. Monomer. The cofactor is [4Fe-4S] cluster.

The protein localises to the cytoplasm. It catalyses the reaction N(6)-dimethylallyladenosine(37) in tRNA + (sulfur carrier)-SH + AH2 + 2 S-adenosyl-L-methionine = 2-methylsulfanyl-N(6)-dimethylallyladenosine(37) in tRNA + (sulfur carrier)-H + 5'-deoxyadenosine + L-methionine + A + S-adenosyl-L-homocysteine + 2 H(+). Catalyzes the methylthiolation of N6-(dimethylallyl)adenosine (i(6)A), leading to the formation of 2-methylthio-N6-(dimethylallyl)adenosine (ms(2)i(6)A) at position 37 in tRNAs that read codons beginning with uridine. The protein is tRNA-2-methylthio-N(6)-dimethylallyladenosine synthase of Desulfosudis oleivorans (strain DSM 6200 / JCM 39069 / Hxd3) (Desulfococcus oleovorans).